The primary structure comprises 530 residues: uncharacterized protein (530 aa).

Residues 1–33 (MNNMSLKFPDIAINSSESSDDEDPSSKNEKKDG) are disordered. Residues 24 to 33 (PSSKNEKKDG) show a composition bias toward basic and acidic residues. Helical transmembrane passes span 83 to 103 (FFIL…KTAV), 124 to 144 (WLST…GYLL), 147 to 167 (FPIS…VLLM), 181 to 201 (FFSG…TAMW), 211 to 231 (VVSW…LGYG), 244 to 264 (YPFL…LFFP), 323 to 343 (VTNA…YSGI), 346 to 366 (TLLT…SGIF), 375 to 395 (IPLA…IWKI), 404 to 424 (VVGV…LSLL), 436 to 456 (TVNA…PQLF), and 471 to 491 (SLVS…YYIF).

The protein belongs to the major facilitator superfamily. Allantoate permease family.

It localises to the endoplasmic reticulum. The protein resides in the membrane. This is an uncharacterized protein from Schizosaccharomyces pombe (strain 972 / ATCC 24843) (Fission yeast).